Consider the following 865-residue polypeptide: MRVMEMRKNCQHLWKWGTMLLGMLMICSAAEDLWVTVYYGVPVWKEATTTLFCASEAKAYKTEVHNVWAKHACVPTDPNPQEVLLENVTENFNMWKNNMVEQMHEDIISLWDQSLKPCVKLTPLCVTLNCTDANLNGTNVTSSSGGTMMENGEIKNCSFQVTTSRRDKTQKKYALFYKLDVVPIEKGNISPKNNTSNNTSYGNYTLIHCNSSVITQACPKVSFEPIPIHYCTPAGFAILKCNDKKFNGTGPCKNVSTVQCTHGIRPVVSTQLLLNGSLAEEEVVIRSENFTDNVKTIIVQLNASVQINCTRPNNNTRKSITKGPGRVIYATGQIIGDIRKAHCNLSRAQWNNTLKQVVTKLREQFDNKTIVFTSSSGGDPEIVLHSFNCGGEFFYCNTTQLFNSTWNSTEGSNNTGGNDTITLPCRIKQIVNMWQEVGKAMYAPPISGQIKCISNITGLLLTRDGGEDTTNTTEIFRLGGGNMRDNWRSELYKYKVVRIEPLGVAPTRAKRRVVQREKRAVGTIGAMFLGFLGAAGSTMGAGSITLTVQARHLLSGIVQQQNNLLRAIEAQQHLLQLTVWGIKQLQARVLAVERYLRDQQLLGIWGCSGKLICTTTVPWNASWSNKSLNMIWNNMTWMQWEREIDNYTGIIYNLLEESQNQQEKNEQELLELDKWANLWNWFDITQWLWYIRIFIMIVGGLVGLKIVFAVLSIVNRVRQGYSPLSFQTHLPAPRGPDRPEGIEGEGGERDRDRSGGAVNGFLTLIWDDLWTLCSFSYHRLRDLLLIVVRIVELLGRRGWEALKYWWNLLQYWSQELKNSAVSLLNTTAIAVAEGTDRIIEVAQRILRAFLHIPRRIRQGLERALL.

Positions 1–31 are cleaved as a signal peptide; the sequence is MRVMEMRKNCQHLWKWGTMLLGMLMICSAAE. Residues 32-693 lie on the Extracellular side of the membrane; that stretch reads DLWVTVYYGV…ITQWLWYIRI (662 aa). A disulfide bridge links Cys53 with Cys73. N-linked (GlcNAc...) asparagine; by host glycans are attached at residues Asn87, Asn129, Asn136, Asn139, Asn156, Asn193, Asn194, Asn197, Asn198, Asn203, Asn210, Asn247, Asn254, Asn275, Asn289, Asn302, Asn308, Asn314, Asn344, Asn351, and Asn367. Intrachain disulfides connect Cys118–Cys218, Cys125–Cys209, Cys130–Cys157, Cys231–Cys260, and Cys241–Cys252. The tract at residues 130-156 is V1; it reads CTDANLNGTNVTSSSGGTMMENGEIKN. The interval 157-209 is V2; sequence CSFQVTTSRRDKTQKKYALFYKLDVVPIEKGNISPKNNTSNNTSYGNYTLIHC. The tract at residues 309-342 is V3; sequence CTRPNNNTRKSITKGPGRVIYATGQIIGDIRKAH. A disulfide bridge connects residues Cys309 and Cys343. Positions 375-385 are CD4-binding loop; the sequence is SSGGDPEIVLH. 2 disulfides stabilise this stretch: Cys389-Cys452 and Cys396-Cys425. The segment at 396–425 is V4; the sequence is CNTTQLFNSTWNSTEGSNNTGGNDTITLPC. Residues Asn397, Asn403, Asn407, Asn413, Asn418, Asn455, and Asn471 are each glycosylated (N-linked (GlcNAc...) asparagine; by host). 2 V5 regions span residues 468 to 479 and 470 to 479; these read DTTNTTEIFRLG and TNTTEIFRLG. The fusion peptide stretch occupies residues 520 to 541; the sequence is AVGTIGAMFLGFLGAAGSTMGA. The tract at residues 583 to 601 is immunosuppression; the sequence is KQLQARVLAVERYLRDQQL. A disulfide bridge connects residues Cys607 and Cys613. 4 N-linked (GlcNAc...) asparagine; by host glycosylation sites follow: Asn620, Asn625, Asn634, and Asn646. Residues 642-676 are a coiled coil; that stretch reads REIDNYTGIIYNLLEESQNQQEKNEQELLELDKWA. The tract at residues 671-692 is MPER; binding to GalCer; that stretch reads ELDKWANLWNWFDITQWLWYIR. The helical transmembrane segment at 694–714 threads the bilayer; it reads FIMIVGGLVGLKIVFAVLSIV. Over 715-865 the chain is Cytoplasmic; that stretch reads NRVRQGYSPL…IRQGLERALL (151 aa). Residues 721–724 carry the YXXL motif; contains endocytosis signal motif; that stretch reads YSPL. A disordered region spans residues 728–754; sequence THLPAPRGPDRPEGIEGEGGERDRDRS. The segment covering 735 to 754 has biased composition (basic and acidic residues); sequence GPDRPEGIEGEGGERDRDRS. The S-palmitoyl cysteine; by host moiety is linked to residue Cys773. The short motif at 864–865 is the Di-leucine internalization motif element; that stretch reads LL.

It belongs to the HIV-1 env protein family. In terms of assembly, the mature envelope protein (Env) consists of a homotrimer of non-covalently associated gp120-gp41 heterodimers. The resulting complex protrudes from the virus surface as a spike. There seems to be as few as 10 spikes on the average virion. Interacts with host CD4, CCR5 and CXCR4. Gp120 also interacts with the C-type lectins CD209/DC-SIGN and CLEC4M/DC-SIGNR (collectively referred to as DC-SIGN(R)). Gp120 and gp41 interact with GalCer. Gp120 interacts with host ITGA4/ITGB7 complex; on CD4+ T-cells, this interaction results in rapid activation of integrin ITGAL/LFA-1, which facilitates efficient cell-to-cell spreading of HIV-1. Gp120 interacts with cell-associated heparan sulfate; this interaction increases virus infectivity on permissive cells and may be involved in infection of CD4- cells. As to quaternary structure, the mature envelope protein (Env) consists of a homotrimer of non-covalently associated gp120-gp41 heterodimers. The resulting complex protrudes from the virus surface as a spike. There seems to be as few as 10 spikes on the average virion. Highly glycosylated by host. The high number of glycan on the protein is reffered to as 'glycan shield' because it contributes to hide protein sequence from adaptive immune system. Post-translationally, palmitoylation of the transmembrane protein and of Env polyprotein (prior to its proteolytic cleavage) is essential for their association with host cell membrane lipid rafts. Palmitoylation is therefore required for envelope trafficking to classical lipid rafts, but not for viral replication. In terms of processing, specific enzymatic cleavages in vivo yield mature proteins. Envelope glycoproteins are synthesized as an inactive precursor that is heavily N-glycosylated and processed likely by host cell furin in the Golgi to yield the mature SU and TM proteins. The cleavage site between SU and TM requires the minimal sequence [KR]-X-[KR]-R. About 2 of the 9 disulfide bonds of gp41 are reduced by P4HB/PDI, following binding to CD4 receptor.

Its subcellular location is the virion membrane. The protein localises to the host cell membrane. It is found in the host endosome membrane. Oligomerizes in the host endoplasmic reticulum into predominantly trimers. In a second time, gp160 transits in the host Golgi, where glycosylation is completed. The precursor is then proteolytically cleaved in the trans-Golgi and thereby activated by cellular furin or furin-like proteases to produce gp120 and gp41. Its function is as follows. Attaches the virus to the host lymphoid cell by binding to the primary receptor CD4. This interaction induces a structural rearrangement creating a high affinity binding site for a chemokine coreceptor like CXCR4 and/or CCR5. Acts as a ligand for CD209/DC-SIGN and CLEC4M/DC-SIGNR, which are respectively found on dendritic cells (DCs), and on endothelial cells of liver sinusoids and lymph node sinuses. These interactions allow capture of viral particles at mucosal surfaces by these cells and subsequent transmission to permissive cells. HIV subverts the migration properties of dendritic cells to gain access to CD4+ T-cells in lymph nodes. Virus transmission to permissive T-cells occurs either in trans (without DCs infection, through viral capture and transmission), or in cis (following DCs productive infection, through the usual CD4-gp120 interaction), thereby inducing a robust infection. In trans infection, bound virions remain infectious over days and it is proposed that they are not degraded, but protected in non-lysosomal acidic organelles within the DCs close to the cell membrane thus contributing to the viral infectious potential during DCs' migration from the periphery to the lymphoid tissues. On arrival at lymphoid tissues, intact virions recycle back to DCs' cell surface allowing virus transmission to CD4+ T-cells. In terms of biological role, acts as a class I viral fusion protein. Under the current model, the protein has at least 3 conformational states: pre-fusion native state, pre-hairpin intermediate state, and post-fusion hairpin state. During fusion of viral and target intracellular membranes, the coiled coil regions (heptad repeats) assume a trimer-of-hairpins structure, positioning the fusion peptide in close proximity to the C-terminal region of the ectodomain. The formation of this structure appears to drive apposition and subsequent fusion of viral and target cell membranes. Complete fusion occurs in host cell endosomes and is dynamin-dependent, however some lipid transfer might occur at the plasma membrane. The virus undergoes clathrin-dependent internalization long before endosomal fusion, thus minimizing the surface exposure of conserved viral epitopes during fusion and reducing the efficacy of inhibitors targeting these epitopes. Membranes fusion leads to delivery of the nucleocapsid into the cytoplasm. This is Envelope glycoprotein gp160 from Homo sapiens (Human).